A 124-amino-acid polypeptide reads, in one-letter code: Large ribosomal subunit protein bL12 (124 aa).

It belongs to the bacterial ribosomal protein bL12 family. As to quaternary structure, homodimer. Part of the ribosomal stalk of the 50S ribosomal subunit. Forms a multimeric L10(L12)X complex, where L10 forms an elongated spine to which 2 to 4 L12 dimers bind in a sequential fashion. Binds GTP-bound translation factors.

Forms part of the ribosomal stalk which helps the ribosome interact with GTP-bound translation factors. Is thus essential for accurate translation. The polypeptide is Large ribosomal subunit protein bL12 (Nitrosomonas europaea (strain ATCC 19718 / CIP 103999 / KCTC 2705 / NBRC 14298)).